The sequence spans 318 residues: Thymidylate synthase (318 aa).

Residues R26 and 181–182 (RR) each bind dUMP. Catalysis depends on C201, which acts as the Nucleophile. Residues 221-224 (RSAD), N232, and 262-264 (HIY) each bind dUMP. D224 lines the (6R)-5,10-methylene-5,6,7,8-tetrahydrofolate pocket. A317 serves as a coordination point for (6R)-5,10-methylene-5,6,7,8-tetrahydrofolate.

The protein belongs to the thymidylate synthase family. Bacterial-type ThyA subfamily. Homodimer.

Its subcellular location is the cytoplasm. It carries out the reaction dUMP + (6R)-5,10-methylene-5,6,7,8-tetrahydrofolate = 7,8-dihydrofolate + dTMP. Its pathway is pyrimidine metabolism; dTTP biosynthesis. Catalyzes the reductive methylation of 2'-deoxyuridine-5'-monophosphate (dUMP) to 2'-deoxythymidine-5'-monophosphate (dTMP) while utilizing 5,10-methylenetetrahydrofolate (mTHF) as the methyl donor and reductant in the reaction, yielding dihydrofolate (DHF) as a by-product. This enzymatic reaction provides an intracellular de novo source of dTMP, an essential precursor for DNA biosynthesis. This Staphylococcus haemolyticus (strain JCSC1435) protein is Thymidylate synthase.